The following is a 181-amino-acid chain: Peptide deformylase (181 aa).

Fe cation contacts are provided by cysteine 99 and histidine 141. Glutamate 142 is a catalytic residue. Histidine 145 serves as a coordination point for Fe cation.

The protein belongs to the polypeptide deformylase family. It depends on Fe(2+) as a cofactor.

The enzyme catalyses N-terminal N-formyl-L-methionyl-[peptide] + H2O = N-terminal L-methionyl-[peptide] + formate. Functionally, removes the formyl group from the N-terminal Met of newly synthesized proteins. Requires at least a dipeptide for an efficient rate of reaction. N-terminal L-methionine is a prerequisite for activity but the enzyme has broad specificity at other positions. The chain is Peptide deformylase from Chlamydia trachomatis serovar A (strain ATCC VR-571B / DSM 19440 / HAR-13).